A 1087-amino-acid chain; its full sequence is Error-prone DNA polymerase 3 (1087 aa).

The disordered stretch occupies residues 1040 to 1064 (AGRGDEFAHGSPGSSDTRDKSKPVV).

This sequence belongs to the DNA polymerase type-C family. DnaE2 subfamily.

The protein resides in the cytoplasm. The enzyme catalyses DNA(n) + a 2'-deoxyribonucleoside 5'-triphosphate = DNA(n+1) + diphosphate. DNA polymerase involved in damage-induced mutagenesis and translesion synthesis (TLS). It is not the major replicative DNA polymerase. The protein is Error-prone DNA polymerase 3 of Agrobacterium fabrum (strain C58 / ATCC 33970) (Agrobacterium tumefaciens (strain C58)).